The following is a 475-amino-acid chain: MSPKTETKASVGFKAGVKDYRLTYYTPEYETKETDILAAFRVTPQPGVPPEEAGAAVAAESSTGTWTTVWTDGLTSLDRYKGRCYHIEPVAGEENQYIAYVAYPLDLFEEGSVTNMFTSIVGNVFGFKALRALRLEDLRIPPAYSKTFQGPPHGIQVERDKLNKYGRPLLGCTIKPKLGLSAKNYGRAVYECLRGGLDFTKDDENVNSQPFMRWRDRFVFCAEAIYKAQAETGEIKGHYLNATAGTCEEMIKRAVFARELGVPIVMHDYLTGGFTANTSLAHYCRDNGLLLHIHRAMHAVIDRQRNHGMHFRVLAKALRMSGGDHIHAGTVVGKLEGERDVTLGFVDLLRDDFIEKDRSRGIYFTQDWVSMPGVLPVASGGIHVWHMPALTEIFGDDSVLQFGGGTLGHPWGNAPGAVANRVALEACVQARNEGRDLAREGNEVIREASKWSPELAAACEVWREIKFEFEAMDVL.

The propeptide occupies Met1 to Ser2. Pro3 carries the post-translational modification N-acetylproline. Position 14 is an N6,N6,N6-trimethyllysine (Lys14). Residues Asn123 and Thr173 each coordinate substrate. Residue Lys175 is the Proton acceptor of the active site. Lys177 contacts substrate. Mg(2+) is bound by residues Lys201, Asp203, and Glu204. Lys201 carries the post-translational modification N6-carboxylysine. His294 acts as the Proton acceptor in catalysis. Arg295, His327, and Ser379 together coordinate substrate.

The protein belongs to the RuBisCO large chain family. Type I subfamily. In terms of assembly, heterohexadecamer of 8 large chains and 8 small chains; disulfide-linked. The disulfide link is formed within the large subunit homodimers. Mg(2+) is required as a cofactor. Post-translationally, the disulfide bond which can form in the large chain dimeric partners within the hexadecamer appears to be associated with oxidative stress and protein turnover.

It is found in the plastid. It localises to the chloroplast. It carries out the reaction 2 (2R)-3-phosphoglycerate + 2 H(+) = D-ribulose 1,5-bisphosphate + CO2 + H2O. It catalyses the reaction D-ribulose 1,5-bisphosphate + O2 = 2-phosphoglycolate + (2R)-3-phosphoglycerate + 2 H(+). Functionally, ruBisCO catalyzes two reactions: the carboxylation of D-ribulose 1,5-bisphosphate, the primary event in carbon dioxide fixation, as well as the oxidative fragmentation of the pentose substrate in the photorespiration process. Both reactions occur simultaneously and in competition at the same active site. The protein is Ribulose bisphosphate carboxylase large chain of Illicium oligandrum (Star anise).